A 312-amino-acid chain; its full sequence is DNA-directed RNA polymerase subunit alpha (312 aa).

The interval 1–226 is alpha N-terminal domain (alpha-NTD); the sequence is MIEFEKPIIT…EHLNLFTDLT (226 aa). Positions 243–312 are alpha C-terminal domain (alpha-CTD); that stretch reads DEKVLDRTIE…DLGLGLKNDK (70 aa).

The protein belongs to the RNA polymerase alpha chain family. As to quaternary structure, homodimer. The RNAP catalytic core consists of 2 alpha, 1 beta, 1 beta' and 1 omega subunit. When a sigma factor is associated with the core the holoenzyme is formed, which can initiate transcription.

The catalysed reaction is RNA(n) + a ribonucleoside 5'-triphosphate = RNA(n+1) + diphosphate. Its function is as follows. DNA-dependent RNA polymerase catalyzes the transcription of DNA into RNA using the four ribonucleoside triphosphates as substrates. This chain is DNA-directed RNA polymerase subunit alpha, found in Streptococcus pyogenes serotype M3 (strain ATCC BAA-595 / MGAS315).